A 387-amino-acid chain; its full sequence is Eukaryotic translation initiation factor 3 subunit M (387 aa).

Positions 181 to 340 (LSSKVMIELL…RKVHISSTMH (160 aa)) constitute a PCI domain.

It belongs to the eIF-3 subunit M family. In terms of assembly, component of the eukaryotic translation initiation factor 3 (eIF-3) complex. The eIF-3 complex interacts with pix.

It localises to the cytoplasm. The protein localises to the golgi apparatus. Functionally, component of the eukaryotic translation initiation factor 3 (eIF-3) complex, which is involved in protein synthesis of a specialized repertoire of mRNAs and, together with other initiation factors, stimulates binding of mRNA and methionyl-tRNAi to the 40S ribosome. The eIF-3 complex specifically targets and initiates translation of a subset of mRNAs involved in cell proliferation. The sequence is that of Eukaryotic translation initiation factor 3 subunit M from Drosophila pseudoobscura pseudoobscura (Fruit fly).